The primary structure comprises 636 residues: Chaperone protein DnaK2 (636 aa).

The residue at position 198 (T198) is a Phosphothreonine; by autocatalysis. Positions 604 to 618 are enriched in low complexity; that stretch reads EAGVGAPGAGPEAGT. The tract at residues 604 to 636 is disordered; sequence EAGVGAPGAGPEAGTSSGGGDDVIDAEFSEPEK. A compositionally biased stretch (acidic residues) spans 625–636; that stretch reads DVIDAEFSEPEK.

Belongs to the heat shock protein 70 family.

In terms of biological role, acts as a chaperone. The sequence is that of Chaperone protein DnaK2 (dnaK2) from Synechocystis sp. (strain ATCC 27184 / PCC 6803 / Kazusa).